The primary structure comprises 667 residues: DNA ligase (667 aa).

Residues 32–36 (DSEYD), 81–82 (SL), and E110 each bind NAD(+). Residue K112 is the N6-AMP-lysine intermediate of the active site. NAD(+) contacts are provided by R133, E167, K283, and K307. C401, C404, C419, and C424 together coordinate Zn(2+). In terms of domain architecture, BRCT spans 586-667 (EGHPDFKDKT…FVQKQNEIEG (82 aa)).

It belongs to the NAD-dependent DNA ligase family. LigA subfamily. The cofactor is Mg(2+). Mn(2+) serves as cofactor.

It catalyses the reaction NAD(+) + (deoxyribonucleotide)n-3'-hydroxyl + 5'-phospho-(deoxyribonucleotide)m = (deoxyribonucleotide)n+m + AMP + beta-nicotinamide D-nucleotide.. In terms of biological role, DNA ligase that catalyzes the formation of phosphodiester linkages between 5'-phosphoryl and 3'-hydroxyl groups in double-stranded DNA using NAD as a coenzyme and as the energy source for the reaction. It is essential for DNA replication and repair of damaged DNA. This chain is DNA ligase, found in Staphylococcus saprophyticus subsp. saprophyticus (strain ATCC 15305 / DSM 20229 / NCIMB 8711 / NCTC 7292 / S-41).